A 94-amino-acid polypeptide reads, in one-letter code: Large ribosomal subunit protein uL23 (94 aa).

The protein belongs to the universal ribosomal protein uL23 family. As to quaternary structure, part of the 50S ribosomal subunit. Contacts protein L29, and trigger factor when it is bound to the ribosome.

In terms of biological role, one of the early assembly proteins it binds 23S rRNA. One of the proteins that surrounds the polypeptide exit tunnel on the outside of the ribosome. Forms the main docking site for trigger factor binding to the ribosome. The sequence is that of Large ribosomal subunit protein uL23 from Lysinibacillus sphaericus (strain C3-41).